A 563-amino-acid polypeptide reads, in one-letter code: MNSDGPKSGKKRREIRAKLVKKLTSDEDGSGKLVKDNNKSLKRGREGKSDVDEPLIKKPASTTPLVTQIAKTSDSYLSKTRFDQFPLSPLTLKGIEDAGFKTMTVVQEATLPLILQGKDILAKAKTGTGKTVAFLLPSIEAVIKAPPASRDNRHPPIIVLVVCPTRELACQAAAEANILLKYHPSIGVQVVIGGTKLPTEQRRLQKSPCQILVATPGRLKDHIDNTSGFATRLMGVKVLVLDEADHLLDMGFRREIERIIAAVPKQRQTFLFSATVSDEVRQICHVALKRDHEFVNCVQEGAGETHQKVSQMYMIASLDRHFSLLYGLLKKHITDNVGYKVIIFCTTAMVTRLVADLLGKLSLNVREIHSRKPQSYRTRVSDEFRKSKSIILVTSDVSARGVDYPDVSLVVQMGLPSDREQYIHRLGRTGRKGKEGEGVLLLAPWEEYFLSSVKDLPITKSSLPPIDHEAVKKVQKGLIQVEMTNKEAAYQAWLGYYKSQKKIARDTTRLVELANEFSRSMGLSIPPAIPVNILGKMGLKNVPGIRVAPGFDKKPAKRNYRSR.

The segment at 21 to 57 is disordered; sequence KKLTSDEDGSGKLVKDNNKSLKRGREGKSDVDEPLIK. Residues 23 to 56 are compositionally biased toward basic and acidic residues; that stretch reads LTSDEDGSGKLVKDNNKSLKRGREGKSDVDEPLI. The residue at position 25 (Ser25) is a Phosphoserine. The Q motif motif lies at 80–108; sequence TRFDQFPLSPLTLKGIEDAGFKTMTVVQE. A Helicase ATP-binding domain is found at 111 to 294; it reads LPLILQGKDI…HVALKRDHEF (184 aa). Residue 124 to 131 participates in ATP binding; it reads AKTGTGKT. The short motif at 242 to 245 is the DEAD box element; the sequence is DEAD. Residues 328 to 479 enclose the Helicase C-terminal domain; it reads LLKKHITDNV…AVKKVQKGLI (152 aa).

It belongs to the DEAD box helicase family.

The enzyme catalyses ATP + H2O = ADP + phosphate + H(+). In Arabidopsis thaliana (Mouse-ear cress), this protein is DEAD-box ATP-dependent RNA helicase 25 (RH25).